Consider the following 452-residue polypeptide: Pup--protein ligase (452 aa).

Mg(2+) is bound at residue E9. R53 provides a ligand contact to ATP. Y55 contributes to the Mg(2+) binding site. Catalysis depends on D57, which acts as the Proton acceptor. E63 provides a ligand contact to Mg(2+). ATP is bound by residues T66 and W419.

The protein belongs to the Pup ligase/Pup deamidase family. Pup-conjugating enzyme subfamily.

The catalysed reaction is ATP + [prokaryotic ubiquitin-like protein]-L-glutamate + [protein]-L-lysine = ADP + phosphate + N(6)-([prokaryotic ubiquitin-like protein]-gamma-L-glutamyl)-[protein]-L-lysine.. The protein operates within protein degradation; proteasomal Pup-dependent pathway. Its pathway is protein modification; protein pupylation. Functionally, catalyzes the covalent attachment of the prokaryotic ubiquitin-like protein modifier Pup to the proteasomal substrate proteins, thereby targeting them for proteasomal degradation. This tagging system is termed pupylation. The ligation reaction involves the side-chain carboxylate of the C-terminal glutamate of Pup and the side-chain amino group of a substrate lysine. The polypeptide is Pup--protein ligase (Rhodococcus erythropolis (strain PR4 / NBRC 100887)).